Consider the following 510-residue polypeptide: MYTSHEDIGYDFEDGPKDKKTLKPHPNIDGGWAWMMVLSSFFVHILIMGSQMALGVLNVEWLEEFHQSRGLTAWVSSLSMGITLIVGPFIGLFINTCGCRQTAIIGGLVNSLGWVLSAYAANVHYLFITFGVAAGLGSGMAYLPAVVMVGRYFQKRRALAQGLSTTGTGFGTFLMTVLLKYLCAEYGWRNAMLIQGAVSLNLCVCGALMRPLSPGKNPNDPGEKDVRGLPAHSTESVKSTGQQGRTEEKDGGLGNEETLCDLQAQECPDQAGHRKNMCALRILKTVSWLTMRVRKGFEDWYSGYFGTASLFTNRMFVAFIFWALFAYSSFVIPFIHLPEIVNLYNLSEQNDVFPLTSIIAIVHIFGKVILGVIADLPCISVWNVFLLANFTLVLSIFILPLMHTYAGLAVICALIGFSSGYFSLMPVVTEDLVGIEHLANAYGIIICANGISALLGPPFAGWIYDITQKYDFSFYICGLLYMIGILFLLIQPCIRIIEQSRRKYMDGAHV.

Topologically, residues 1 to 27 (MYTSHEDIGYDFEDGPKDKKTLKPHPN) are cytoplasmic. Transmembrane regions (helical) follow at residues 28–48 (IDGG…ILIM), 74–94 (WVSS…GLFI), 103–123 (AIIG…AANV), 127–147 (FITF…PAVV), 159–179 (LAQG…TVLL), and 191–209 (AMLI…GALM). The tract at residues 214–255 (PGKNPNDPGEKDVRGLPAHSTESVKSTGQQGRTEEKDGGLGN) is disordered. The span at 233–244 (STESVKSTGQQG) shows a compositional bias: polar residues. The next 6 helical transmembrane spans lie at 315–335 (MFVA…IPFI), 353–373 (FPLT…LGVI), 379–399 (ISVW…IFIL), 408–428 (LAVI…MPVV), 443–463 (GIII…AGWI), and 474–494 (FYIC…QPCI). The Cytoplasmic segment spans residues 495–510 (RIIEQSRRKYMDGAHV).

This sequence belongs to the major facilitator superfamily. Monocarboxylate porter (TC 2.A.1.13) family.

It localises to the cell membrane. Its function is as follows. Proton-linked monocarboxylate transporter. May catalyze the transport of monocarboxylates across the plasma membrane. This chain is Monocarboxylate transporter 14 (SLC16A14), found in Homo sapiens (Human).